The chain runs to 92 residues: Putative regulatory protein Tpet_0986 (92 aa).

Belongs to the RemA family.

The protein is Putative regulatory protein Tpet_0986 of Thermotoga petrophila (strain ATCC BAA-488 / DSM 13995 / JCM 10881 / RKU-1).